We begin with the raw amino-acid sequence, 546 residues long: Cytochrome P450 monooxygenase alnH (546 aa).

Residues 11–31 form a helical membrane-spanning segment; it reads VPYSVPLLGSTVVILIGFIAI. Asparagine 146, asparagine 258, and asparagine 425 each carry an N-linked (GlcNAc...) asparagine glycan. Cysteine 445 contacts heme.

This sequence belongs to the cytochrome P450 family. Requires heme as cofactor.

It localises to the membrane. It participates in polyketide biosynthesis. Its function is as follows. Cytochrome P450 monooxygenase; part of the gene cluster that mediates the biosynthesis of asperlin, a polyketide showing anti-inflammatory, antitumor and antibiotic activities. The first step of the asperlin biosynthesis is the production of the intermediate 2,4,6-octatrienoic acid by the highly redusing polyketide synthase alnA with cleavage of the PKS product by the esterase alnB. 2,4,6-octatrienoic acid is further converted to asperlin via several steps involving the remaining enzymes from the cluster. This is Cytochrome P450 monooxygenase alnH from Emericella nidulans (strain FGSC A4 / ATCC 38163 / CBS 112.46 / NRRL 194 / M139) (Aspergillus nidulans).